Consider the following 116-residue polypeptide: Large ribosomal subunit protein uL18 (116 aa).

Belongs to the universal ribosomal protein uL18 family. In terms of assembly, part of the 50S ribosomal subunit; part of the 5S rRNA/L5/L18/L25 subcomplex. Contacts the 5S and 23S rRNAs.

This is one of the proteins that bind and probably mediate the attachment of the 5S RNA into the large ribosomal subunit, where it forms part of the central protuberance. This chain is Large ribosomal subunit protein uL18, found in Shewanella halifaxensis (strain HAW-EB4).